We begin with the raw amino-acid sequence, 169 residues long: NAD(P)H-quinone oxidoreductase subunit J, chloroplastic (169 aa).

The protein belongs to the complex I 30 kDa subunit family. NDH is composed of at least 16 different subunits, 5 of which are encoded in the nucleus.

It is found in the plastid. Its subcellular location is the chloroplast thylakoid membrane. It catalyses the reaction a plastoquinone + NADH + (n+1) H(+)(in) = a plastoquinol + NAD(+) + n H(+)(out). The catalysed reaction is a plastoquinone + NADPH + (n+1) H(+)(in) = a plastoquinol + NADP(+) + n H(+)(out). Its function is as follows. NDH shuttles electrons from NAD(P)H:plastoquinone, via FMN and iron-sulfur (Fe-S) centers, to quinones in the photosynthetic chain and possibly in a chloroplast respiratory chain. The immediate electron acceptor for the enzyme in this species is believed to be plastoquinone. Couples the redox reaction to proton translocation, and thus conserves the redox energy in a proton gradient. This is NAD(P)H-quinone oxidoreductase subunit J, chloroplastic from Staurastrum punctulatum (Green alga).